Consider the following 93-residue polypeptide: uncharacterized protein (93 aa).

Residues 26–73 (NRGTIFRPMTRNSGIVGRRGGPVAPAPFRNNVQKPGTRPPGFKPPSGV) form a disordered region.

This is an uncharacterized protein from Caenorhabditis elegans.